A 317-amino-acid chain; its full sequence is 4-hydroxy-3-methylbut-2-enyl diphosphate reductase (317 aa).

[4Fe-4S] cluster is bound at residue C12. (2E)-4-hydroxy-3-methylbut-2-enyl diphosphate is bound by residues H41 and H74. Residues H41 and H74 each contribute to the dimethylallyl diphosphate site. Residues H41 and H74 each contribute to the isopentenyl diphosphate site. [4Fe-4S] cluster is bound at residue C97. H125 is a binding site for (2E)-4-hydroxy-3-methylbut-2-enyl diphosphate. H125 is a binding site for dimethylallyl diphosphate. H125 is an isopentenyl diphosphate binding site. E127 serves as the catalytic Proton donor. T168 contributes to the (2E)-4-hydroxy-3-methylbut-2-enyl diphosphate binding site. Position 198 (C198) interacts with [4Fe-4S] cluster. (2E)-4-hydroxy-3-methylbut-2-enyl diphosphate contacts are provided by S226, S227, N228, and S270. Dimethylallyl diphosphate-binding residues include S226, S227, N228, and S270. 4 residues coordinate isopentenyl diphosphate: S226, S227, N228, and S270.

It belongs to the IspH family. In terms of assembly, homodimer. [4Fe-4S] cluster is required as a cofactor.

It carries out the reaction isopentenyl diphosphate + 2 oxidized [2Fe-2S]-[ferredoxin] + H2O = (2E)-4-hydroxy-3-methylbut-2-enyl diphosphate + 2 reduced [2Fe-2S]-[ferredoxin] + 2 H(+). It catalyses the reaction dimethylallyl diphosphate + 2 oxidized [2Fe-2S]-[ferredoxin] + H2O = (2E)-4-hydroxy-3-methylbut-2-enyl diphosphate + 2 reduced [2Fe-2S]-[ferredoxin] + 2 H(+). It functions in the pathway isoprenoid biosynthesis; dimethylallyl diphosphate biosynthesis; dimethylallyl diphosphate from (2E)-4-hydroxy-3-methylbutenyl diphosphate: step 1/1. The protein operates within isoprenoid biosynthesis; isopentenyl diphosphate biosynthesis via DXP pathway; isopentenyl diphosphate from 1-deoxy-D-xylulose 5-phosphate: step 6/6. In terms of biological role, catalyzes the conversion of 1-hydroxy-2-methyl-2-(E)-butenyl 4-diphosphate (HMBPP) into a mixture of isopentenyl diphosphate (IPP) and dimethylallyl diphosphate (DMAPP). Acts in the terminal step of the DOXP/MEP pathway for isoprenoid precursor biosynthesis. This chain is 4-hydroxy-3-methylbut-2-enyl diphosphate reductase, found in Yersinia pestis bv. Antiqua (strain Antiqua).